A 1010-amino-acid chain; its full sequence is Pre-mRNA-splicing factor cwc22 (1010 aa).

The segment covering 1–10 (MASADMSPSR) has biased composition (polar residues). The disordered stretch occupies residues 1-166 (MASADMSPSR…RTPTPPPVAV (166 aa)). The span at 18 to 28 (RSPSPRTQSPS) shows a compositional bias: low complexity. Basic and acidic residues-rich tracts occupy residues 29-39 (PRDEDGSRSPG) and 65-78 (PRRDRSLSPRDQPH). Residues 84-109 (RSPTPRSQSPSRRSVRSPSPRQGSPA) show a composition bias toward low complexity. Residues 142–158 (RHRDAGGDYRPVRKERT) are compositionally biased toward basic and acidic residues. The 184-residue stretch at 222–405 (KKSVNGLVNK…EVLFQVRKDK (184 aa)) folds into the MIF4G domain. A disordered region spans residues 466 to 498 (GEASDDDEDDDDDDESESGSESEDEEQKALEIK). Positions 468–491 (ASDDDEDDDDDDESESGSESEDEE) are enriched in acidic residues. Residues 507-623 (NLRRTIYLSI…GWHVFSVIHL (117 aa)) enclose the MI domain. The disordered stretch occupies residues 708–1010 (LPAPPADSDS…SPVAKRGRVD (303 aa)). Low complexity predominate over residues 718 to 732 (ESVSSYSSYSSYSSR). Basic residues predominate over residues 753–775 (PPRRGRGRSYSRTPSRSRSRSRS). Over residues 776 to 787 (YSRSVSKSVSRS) the composition is skewed to low complexity. Composition is skewed to basic residues over residues 834-846 (RRGRSGTRSRSRS) and 899-910 (RLRRGSYSRSRS). The span at 911 to 935 (RSPIPIRGNGPAGRDTGRAGPAPAR) shows a compositional bias: low complexity. Basic residues predominate over residues 936-948 (GGRRNRSYSRSRT). Low complexity predominate over residues 961-973 (SRRVVSRSPSPVV). The segment covering 976–1010 (NKRRRSYSSSRSRSRSSSRSRYRSRSPVAKRGRVD) has biased composition (basic residues).

The protein belongs to the CWC22 family. In terms of assembly, associated with the spliceosome.

The protein localises to the cytoplasm. Its subcellular location is the nucleus. In terms of biological role, involved in pre-mRNA splicing. The chain is Pre-mRNA-splicing factor cwc22 (msp-1) from Neurospora crassa (strain ATCC 24698 / 74-OR23-1A / CBS 708.71 / DSM 1257 / FGSC 987).